Reading from the N-terminus, the 386-residue chain is Glutamate 5-kinase (386 aa).

Residue Lys28 coordinates ATP. Positions 68, 155, and 167 each coordinate substrate. Position 187 to 188 (187 to 188 (TD)) interacts with ATP. A PUA domain is found at 294 to 372 (RGRLVLDDGA…EKIESILGYI (79 aa)).

It belongs to the glutamate 5-kinase family.

Its subcellular location is the cytoplasm. It catalyses the reaction L-glutamate + ATP = L-glutamyl 5-phosphate + ADP. It participates in amino-acid biosynthesis; L-proline biosynthesis; L-glutamate 5-semialdehyde from L-glutamate: step 1/2. Catalyzes the transfer of a phosphate group to glutamate to form L-glutamate 5-phosphate. The sequence is that of Glutamate 5-kinase from Hahella chejuensis (strain KCTC 2396).